A 465-amino-acid polypeptide reads, in one-letter code: Cysteine--tRNA ligase (465 aa).

A Zn(2+)-binding site is contributed by cysteine 29. Residues 31-41 carry the 'HIGH' region motif; it reads PTVYNYIHIGN. Residues cysteine 209, histidine 234, and glutamate 238 each coordinate Zn(2+). The short motif at 266-270 is the 'KMSKS' region element; it reads KMSKS. Residue lysine 269 participates in ATP binding. Phosphoserine is present on serine 270.

The protein belongs to the class-I aminoacyl-tRNA synthetase family. Monomer. Zn(2+) serves as cofactor.

The protein resides in the cytoplasm. The catalysed reaction is tRNA(Cys) + L-cysteine + ATP = L-cysteinyl-tRNA(Cys) + AMP + diphosphate. The chain is Cysteine--tRNA ligase from Bacillus cytotoxicus (strain DSM 22905 / CIP 110041 / 391-98 / NVH 391-98).